The sequence spans 287 residues: MAGGREIKTKIKSVQNTRKVTRALEMVSASKIRKAQERMKTSRPYAQAMKQVIGHLAQASTDFQHPFLIEREQVKRVGYIVISSDRGLAGGLNNNLFRKMLGEVRPWQGTGAEIDVVTIGQKASAFFRRIKVNMVGSVTHLGDSPQVEQLIGVIKVMIDAFIEGKVDRVYLVYNRFVNTMTQKASFDQLLPLPAAEHKVAHHDWDYLYEPDAASVLEHVMTRYIESLVYQAVLENVASEHAARMVAMKAASDNANKMIGTLQLVYNKARQAAITQEISEIVSGAAAV.

The protein belongs to the ATPase gamma chain family. F-type ATPases have 2 components, CF(1) - the catalytic core - and CF(0) - the membrane proton channel. CF(1) has five subunits: alpha(3), beta(3), gamma(1), delta(1), epsilon(1). CF(0) has three main subunits: a, b and c.

Its subcellular location is the cell inner membrane. Its function is as follows. Produces ATP from ADP in the presence of a proton gradient across the membrane. The gamma chain is believed to be important in regulating ATPase activity and the flow of protons through the CF(0) complex. The polypeptide is ATP synthase gamma chain (Xanthomonas oryzae pv. oryzae (strain MAFF 311018)).